The primary structure comprises 162 residues: NADH-quinone oxidoreductase subunit I 1 (162 aa).

4Fe-4S ferredoxin-type domains lie at 52 to 82 (LRRY…IEAG) and 93 to 122 (VRYD…EGPN). The [4Fe-4S] cluster site is built by C62, C65, C68, C72, C102, C105, C108, and C112.

The protein belongs to the complex I 23 kDa subunit family. As to quaternary structure, NDH-1 is composed of 14 different subunits. Subunits NuoA, H, J, K, L, M, N constitute the membrane sector of the complex. Requires [4Fe-4S] cluster as cofactor.

It localises to the cell inner membrane. The catalysed reaction is a quinone + NADH + 5 H(+)(in) = a quinol + NAD(+) + 4 H(+)(out). In terms of biological role, NDH-1 shuttles electrons from NADH, via FMN and iron-sulfur (Fe-S) centers, to quinones in the respiratory chain. The immediate electron acceptor for the enzyme in this species is believed to be ubiquinone. Couples the redox reaction to proton translocation (for every two electrons transferred, four hydrogen ions are translocated across the cytoplasmic membrane), and thus conserves the redox energy in a proton gradient. This chain is NADH-quinone oxidoreductase subunit I 1, found in Rhodopseudomonas palustris (strain ATCC BAA-98 / CGA009).